The following is a 430-amino-acid chain: Tol-Pal system protein TolB (430 aa).

An N-terminal signal peptide occupies residues 1–26; that stretch reads MSLMTKLGLRALVASCLIAAGGAAHA.

It belongs to the TolB family. As to quaternary structure, the Tol-Pal system is composed of five core proteins: the inner membrane proteins TolA, TolQ and TolR, the periplasmic protein TolB and the outer membrane protein Pal. They form a network linking the inner and outer membranes and the peptidoglycan layer.

It localises to the periplasm. In terms of biological role, part of the Tol-Pal system, which plays a role in outer membrane invagination during cell division and is important for maintaining outer membrane integrity. This Paraburkholderia phymatum (strain DSM 17167 / CIP 108236 / LMG 21445 / STM815) (Burkholderia phymatum) protein is Tol-Pal system protein TolB.